We begin with the raw amino-acid sequence, 410 residues long: Multidrug resistance protein MdtA (410 aa).

The signal sequence occupies residues 1 to 21; that stretch reads MNNRYPVMKKGLIVLVVIAVA. The tract at residues 36-56 is disordered; that stretch reads SDGDLSGQSAHGKRGNGAHKP.

It belongs to the membrane fusion protein (MFP) (TC 8.A.1) family. As to quaternary structure, part of a tripartite efflux system composed of MdtA, MdtB and MdtC.

Its subcellular location is the cell inner membrane. This chain is Multidrug resistance protein MdtA, found in Pantoea ananatis (strain AJ13355).